The following is a 549-amino-acid chain: Frizzled/smoothened-like sans CRD protein A (549 aa).

Residues 1-22 (MKFNFKLILIILIINQILIINC) form the signal peptide. Residues 23–89 (KENKILEIYK…EVNTLSLMIK (67 aa)) are Extracellular-facing. Asn63 carries an N-linked (GlcNAc...) asparagine glycan. A helical membrane pass occupies residues 90–110 (ITGTISFIASLILLLIYSPLI). At 111-119 (NRMGYNRHT) the chain is on the cytoplasmic side. Residues 120 to 140 (IGIFFLTFSVFLIMLTDIIYV) traverse the membrane as a helical segment. Over 141–162 (HHGNDLICPQSHRYSRQNDSGC) the chain is Extracellular. The N-linked (GlcNAc...) asparagine glycan is linked to Asn158. The chain crosses the membrane as a helical span at residues 163 to 183 (TITGILFQYGCIAAVLFWATL). Over 184-198 (SLDLYLTLKKISTKK) the chain is Cytoplasmic. Residues 199 to 219 (VEKWYLIILTLIALILTFVPL) traverse the membrane as a helical segment. Topologically, residues 220–241 (VKKSYGYLVTGLACWILDSTDQ) are extracellular. A helical transmembrane segment spans residues 242–262 (IIFFWAPFTAILGIGSILIVL). Residues 263 to 287 (VVYEIYKISKITKQNRGIFQSHIRP) are Cytoplasmic-facing. The chain crosses the membrane as a helical span at residues 288-308 (LLMVLFIFGQFLFILAFNALI). Over 309-346 (NNKYDEYSARMDSYIDCLFSSSSYSYLCRLKTFPFEME) the chain is Extracellular. A helical membrane pass occupies residues 347 to 367 (FIVLFFLRLIGIEVLIFYGFT). Residues 368–549 (QQTKKILLHS…NNNSNNDENN (182 aa)) lie on the Cytoplasmic side of the membrane. Low complexity-rich tracts occupy residues 417 to 474 (NNNN…SQQN) and 536 to 549 (NKNI…DENN). Disordered stretches follow at residues 417 to 483 (NNNN…QKLS) and 528 to 549 (QYEE…DENN). Residues 432 to 475 (NNLNNNLNNNNLNNNNNLNNLNNLNINNNLKNSQNNLNNSQQNE) are a coiled coil.

The protein belongs to the G-protein coupled receptor Fz/Smo family.

The protein resides in the membrane. This chain is Frizzled/smoothened-like sans CRD protein A (fscA), found in Dictyostelium discoideum (Social amoeba).